Reading from the N-terminus, the 475-residue chain is Ribulose bisphosphate carboxylase large chain (475 aa).

A propeptide spanning residues 1 to 2 (MS) is cleaved from the precursor. Residue P3 is modified to N-acetylproline. N6,N6,N6-trimethyllysine is present on K14. Residues N123 and T173 each contribute to the substrate site. Catalysis depends on K175, which acts as the Proton acceptor. Substrate is bound at residue K177. Mg(2+) contacts are provided by K201, D203, and E204. K201 bears the N6-carboxylysine mark. H294 acts as the Proton acceptor in catalysis. Residues R295, H327, and S379 each coordinate substrate.

The protein belongs to the RuBisCO large chain family. Type I subfamily. In terms of assembly, heterohexadecamer of 8 large chains and 8 small chains; disulfide-linked. The disulfide link is formed within the large subunit homodimers. Mg(2+) serves as cofactor. In terms of processing, the disulfide bond which can form in the large chain dimeric partners within the hexadecamer appears to be associated with oxidative stress and protein turnover.

The protein localises to the plastid. It is found in the chloroplast. It carries out the reaction 2 (2R)-3-phosphoglycerate + 2 H(+) = D-ribulose 1,5-bisphosphate + CO2 + H2O. The catalysed reaction is D-ribulose 1,5-bisphosphate + O2 = 2-phosphoglycolate + (2R)-3-phosphoglycerate + 2 H(+). Functionally, ruBisCO catalyzes two reactions: the carboxylation of D-ribulose 1,5-bisphosphate, the primary event in carbon dioxide fixation, as well as the oxidative fragmentation of the pentose substrate in the photorespiration process. Both reactions occur simultaneously and in competition at the same active site. In Citrus sinensis (Sweet orange), this protein is Ribulose bisphosphate carboxylase large chain.